A 358-amino-acid chain; its full sequence is Glutamate--cysteine ligase (358 aa).

It belongs to the glutamate--cysteine ligase type 2 family. YbdK subfamily.

It catalyses the reaction L-cysteine + L-glutamate + ATP = gamma-L-glutamyl-L-cysteine + ADP + phosphate + H(+). In terms of biological role, catalyzes the synthesis of gamma-glutamylcysteine (gamma-GC), the main low-molecular-weight thiol compound instead of glutathione in halophilic archaea. This Haloferax volcanii (strain ATCC 29605 / DSM 3757 / JCM 8879 / NBRC 14742 / NCIMB 2012 / VKM B-1768 / DS2) (Halobacterium volcanii) protein is Glutamate--cysteine ligase.